The chain runs to 641 residues: 1-deoxy-D-xylulose-5-phosphate synthase (641 aa).

Residues His79 and 120–122 each bind thiamine diphosphate; that span reads AHS. Asp151 provides a ligand contact to Mg(2+). Residues 152–153, Asn180, Tyr290, and Glu372 each bind thiamine diphosphate; that span reads GS. A Mg(2+)-binding site is contributed by Asn180.

Belongs to the transketolase family. DXPS subfamily. As to quaternary structure, homodimer. Mg(2+) is required as a cofactor. It depends on thiamine diphosphate as a cofactor.

It carries out the reaction D-glyceraldehyde 3-phosphate + pyruvate + H(+) = 1-deoxy-D-xylulose 5-phosphate + CO2. It functions in the pathway metabolic intermediate biosynthesis; 1-deoxy-D-xylulose 5-phosphate biosynthesis; 1-deoxy-D-xylulose 5-phosphate from D-glyceraldehyde 3-phosphate and pyruvate: step 1/1. In terms of biological role, catalyzes the acyloin condensation reaction between C atoms 2 and 3 of pyruvate and glyceraldehyde 3-phosphate to yield 1-deoxy-D-xylulose-5-phosphate (DXP). This Rhodopseudomonas palustris (strain BisB18) protein is 1-deoxy-D-xylulose-5-phosphate synthase.